A 631-amino-acid polypeptide reads, in one-letter code: DDB1- and CUL4-associated factor 8-like protein 2 (631 aa).

Disordered regions lie at residues 1-91 and 108-163; these read MSHQ…EDFE and EEET…HEQY. Polar residues predominate over residues 44 to 54; sequence SELSVTVTGDG. Composition is skewed to acidic residues over residues 77–88 and 108–147; these read SASEDIELESLE and EEET…EEEE. WD repeat units follow at residues 226–265, 269–310, 316–356, 364–404, 420–459, 467–507, and 511–550; these read DHVG…PVLN, GHTN…YFNN, QHRG…PASK, DKKV…KKEN, DFPT…GAQY, RNNT…IIQF, and SREG…ATEL. Positions 594-631 are disordered; that stretch reads QDWRSGEAEFPDEESDESSSTSETSEEEVQDRVQCMPS.

Belongs to the WD repeat DCAF8 family.

This chain is DDB1- and CUL4-associated factor 8-like protein 2 (DCAF8L2), found in Homo sapiens (Human).